Here is a 522-residue protein sequence, read N- to C-terminus: Cytochrome P450 monooxygenase AKT7 (522 aa).

A helical membrane pass occupies residues 10–30 (LYVTCTVLAALILGYIQAMII). Cys452 is a heme binding site.

The protein belongs to the cytochrome P450 family. Heme is required as a cofactor.

It is found in the membrane. It participates in mycotoxin biosynthesis. In terms of biological role, cytochrome P450 monooxygenase; part of the gene clusters that mediate the biosynthesis of the host-selective toxins (HSTs) AK-toxins responsible for Japanese pear black spot disease by the Japanese pear pathotype. AK-toxins are esters of 9,10-epoxy 8-hydroxy 9-methyldecatrienoic acid (EDA). On cellular level, AK-toxins affect plasma membrane of susceptible cells and cause a sudden increase in loss of K(+) after a few minutes of toxin treatment. The acyl-CoA ligase AKT1, the hydrolase AKT2 and enoyl-CoA hydratase AKT3 are all involved in the biosynthesis of the AK-, AF- and ACT-toxin common 9,10-epoxy-8-hydroxy-9-methyl-decatrienoic acid (EDA) structural moiety. Part of the EDA biosynthesis occurs in the peroxisome since these 3 enzymes are localized in peroxisomes. The exact roles of the 3 enzymes, as well as of additional AK-toxin clusters enzymes, including AKT4, AKT6 and AKTS1, have still to be elucidated. The Cytochrome P450 monooxygenase AKT7 on the other side functions to limit production of EDA and AK-toxin, probably via the catalysis of a side reaction of EDA or its precursor. The polypeptide is Cytochrome P450 monooxygenase AKT7 (Alternaria alternata (Alternaria rot fungus)).